Consider the following 648-residue polypeptide: Transketolase (648 aa).

Position 22 (His-22) interacts with substrate. Thiamine diphosphate-binding positions include His-62 and 109–111 (GPL). Residue Asp-150 participates in Mg(2+) binding. 2 residues coordinate thiamine diphosphate: Gly-151 and Asn-180. Residues Asn-180 and Val-182 each coordinate Mg(2+). Substrate-binding residues include His-252, Arg-345, and Ser-372. His-252 contributes to the thiamine diphosphate binding site. Residue Glu-397 is the Proton donor of the active site. Residue Phe-423 coordinates thiamine diphosphate. His-447, Asp-455, and Arg-506 together coordinate substrate.

The protein belongs to the transketolase family. As to quaternary structure, homodimer. The cofactor is Mg(2+). Ca(2+) is required as a cofactor. Requires Mn(2+) as cofactor. It depends on Co(2+) as a cofactor. Thiamine diphosphate serves as cofactor.

It carries out the reaction D-sedoheptulose 7-phosphate + D-glyceraldehyde 3-phosphate = aldehydo-D-ribose 5-phosphate + D-xylulose 5-phosphate. Functionally, catalyzes the transfer of a two-carbon ketol group from a ketose donor to an aldose acceptor, via a covalent intermediate with the cofactor thiamine pyrophosphate. This is Transketolase (tkt) from Mycoplasma genitalium (strain ATCC 33530 / DSM 19775 / NCTC 10195 / G37) (Mycoplasmoides genitalium).